The primary structure comprises 334 residues: Holliday junction branch migration complex subunit RuvB (334 aa).

The interval 1-182 (MDERLVSTEA…FGVHARLEYY (182 aa)) is large ATPase domain (RuvB-L). ATP-binding positions include Leu21, Arg22, Gly63, Lys66, Thr67, Thr68, 129 to 131 (EDF), Arg172, Tyr182, and Arg219. A Mg(2+)-binding site is contributed by Thr67. Residues 183–253 (EQRDLAHIVS…IAEDALERLQ (71 aa)) form a small ATPAse domain (RuvB-S) region. The interval 256–334 (KLGLDHIDHK…HFQMEVPIRD (79 aa)) is head domain (RuvB-H). DNA is bound by residues Arg311 and Arg316.

This sequence belongs to the RuvB family. Homohexamer. Forms an RuvA(8)-RuvB(12)-Holliday junction (HJ) complex. HJ DNA is sandwiched between 2 RuvA tetramers; dsDNA enters through RuvA and exits via RuvB. An RuvB hexamer assembles on each DNA strand where it exits the tetramer. Each RuvB hexamer is contacted by two RuvA subunits (via domain III) on 2 adjacent RuvB subunits; this complex drives branch migration. In the full resolvosome a probable DNA-RuvA(4)-RuvB(12)-RuvC(2) complex forms which resolves the HJ.

It is found in the cytoplasm. The enzyme catalyses ATP + H2O = ADP + phosphate + H(+). Its function is as follows. The RuvA-RuvB-RuvC complex processes Holliday junction (HJ) DNA during genetic recombination and DNA repair, while the RuvA-RuvB complex plays an important role in the rescue of blocked DNA replication forks via replication fork reversal (RFR). RuvA specifically binds to HJ cruciform DNA, conferring on it an open structure. The RuvB hexamer acts as an ATP-dependent pump, pulling dsDNA into and through the RuvAB complex. RuvB forms 2 homohexamers on either side of HJ DNA bound by 1 or 2 RuvA tetramers; 4 subunits per hexamer contact DNA at a time. Coordinated motions by a converter formed by DNA-disengaged RuvB subunits stimulates ATP hydrolysis and nucleotide exchange. Immobilization of the converter enables RuvB to convert the ATP-contained energy into a lever motion, pulling 2 nucleotides of DNA out of the RuvA tetramer per ATP hydrolyzed, thus driving DNA branch migration. The RuvB motors rotate together with the DNA substrate, which together with the progressing nucleotide cycle form the mechanistic basis for DNA recombination by continuous HJ branch migration. Branch migration allows RuvC to scan DNA until it finds its consensus sequence, where it cleaves and resolves cruciform DNA. This is Holliday junction branch migration complex subunit RuvB from Bacillus pumilus (strain SAFR-032).